The chain runs to 421 residues: Acyl-coenzyme A thioesterase 6 (421 aa).

Active-site charge relay system residues include Ser232, Asp326, and His360. Positions 419–421 (SKI) match the Peroxisome targeting signal motif.

Belongs to the C/M/P thioester hydrolase family.

It localises to the peroxisome. Its subcellular location is the cytoplasm. The catalysed reaction is pristanoyl-CoA + H2O = 2,6,10,14-tetramethylpentadecanoate + CoA + H(+). It catalyses the reaction phytanoyl-CoA + H2O = 3,7,11,15-tetramethylhexadecanoate + CoA + H(+). Its pathway is lipid metabolism; fatty acid metabolism. Its function is as follows. Catalyzes the hydrolysis of acyl-CoAs into free fatty acids and coenzyme A (CoASH), regulating their respective intracellular levels. Catalyzes the hydrolysis of phytanoyl-CoA and pristanoyl-CoA, two methyl-branched fatty acids derived from phytol, that enter the body via the diet. This chain is Acyl-coenzyme A thioesterase 6, found in Homo sapiens (Human).